Reading from the N-terminus, the 481-residue chain is Glutamine synthetase (481 aa).

One can recognise a GS beta-grasp domain in the interval 22–106 (NEVEFVDFRF…VFCDVYDVYK (85 aa)). In terms of domain architecture, GS catalytic spans 114–481 (PRSIAKKALK…PFEFITTYSC (368 aa)). Residues E139, E141, E223, and E230 each coordinate Mg(2+). Residues 274–275 (NG) and G275 contribute to the L-glutamate site. Mg(2+) is bound at residue H279. Residues 281–283 (HVS) and S283 contribute to the ATP site. L-glutamate contacts are provided by R331, E337, and R349. Positions 349 and 354 each coordinate ATP. E367 provides a ligand contact to Mg(2+). L-glutamate is bound at residue R369.

This sequence belongs to the glutamine synthetase family. Oligomer of 12 subunits arranged in the form of two hexameric ring. Requires Mg(2+) as cofactor.

It is found in the cytoplasm. The catalysed reaction is L-glutamate + NH4(+) + ATP = L-glutamine + ADP + phosphate + H(+). With respect to regulation, the activity of this enzyme could be controlled by adenylation under conditions of abundant glutamine. Functionally, catalyzes the ATP-dependent biosynthesis of glutamine from glutamate and ammonia. This is Glutamine synthetase from Helicobacter pylori (strain J99 / ATCC 700824) (Campylobacter pylori J99).